A 341-amino-acid chain; its full sequence is Glyceraldehyde-3-phosphate dehydrogenase 2 (341 aa).

NAD(+)-binding positions include 13–14, aspartate 35, and arginine 85; that span reads RI. Residues 157–159, threonine 188, 217–218, and arginine 240 contribute to the D-glyceraldehyde 3-phosphate site; these read SCT and TG. Cysteine 158 functions as the Nucleophile in the catalytic mechanism. Asparagine 322 contributes to the NAD(+) binding site.

Belongs to the glyceraldehyde-3-phosphate dehydrogenase family. As to quaternary structure, homotetramer.

It is found in the cytoplasm. The catalysed reaction is D-glyceraldehyde 3-phosphate + phosphate + NAD(+) = (2R)-3-phospho-glyceroyl phosphate + NADH + H(+). The protein operates within carbohydrate degradation; glycolysis; pyruvate from D-glyceraldehyde 3-phosphate: step 1/5. This chain is Glyceraldehyde-3-phosphate dehydrogenase 2 (gpd-2), found in Caenorhabditis elegans.